The chain runs to 440 residues: Damage-control phosphatase ARMT1 (440 aa).

Residues aspartate 252 and asparagine 253 each coordinate Mn(2+). Substrate is bound at residue 252-253; that stretch reads DN. Glutamate 257 and aspartate 290 together coordinate S-adenosyl-L-methionine. Aspartate 290 serves as a coordination point for Mn(2+). Residues 366-370 and lysine 403 contribute to the substrate site; that span reads DLNYR. The Subfamily III RTxK motif motif lies at 400–403; that stretch reads RTLK.

Belongs to the damage-control phosphatase family. Sugar phosphate phosphatase III subfamily. It depends on Mn(2+) as a cofactor. Ni(2+) serves as cofactor. Automethylated.

The catalysed reaction is beta-D-fructose 1-phosphate + H2O = D-fructose + phosphate. It catalyses the reaction beta-D-fructose 6-phosphate = dihydroxyacetone + D-glyceraldehyde 3-phosphate. The enzyme catalyses L-glutamyl-[protein] + S-adenosyl-L-methionine = [protein]-L-glutamate 5-O-methyl ester + S-adenosyl-L-homocysteine. Metal-dependent phosphatase that shows phosphatase activity against several substrates, including fructose-1-phosphate and fructose-6-phosphate. Its preference for fructose-1-phosphate, a strong glycating agent that causes DNA damage rather than a canonical yeast metabolite, suggests a damage-control function in hexose phosphate metabolism. Has also been shown to have O-methyltransferase activity that methylates glutamate residues of target proteins to form gamma-glutamyl methyl ester residues. Possibly methylates PCNA, suggesting it is involved in the DNA damage response. The protein is Damage-control phosphatase ARMT1 of Xenopus tropicalis (Western clawed frog).